A 371-amino-acid polypeptide reads, in one-letter code: Protein-tyrosine sulfotransferase 2 (371 aa).

The Cytoplasmic segment spans residues 1-8 (MRVTMRRV). Residues 9–25 (LLAVGSVVALMVTLHLG) traverse the membrane as a helical; Signal-anchor for type II membrane protein segment. Over 26 to 371 (QQVLECQHVL…QVTQNTSSSH (346 aa)) the chain is Lumenal. Position 76 to 80 (76 to 80 (RSGTT)) interacts with 3'-phosphoadenylyl sulfate. A disulfide bond links C94 and C154. The active-site Proton donor/acceptor is the E97. The tract at residues 99–103 (RIIPR) is interaction with peptide substrate. 3'-phosphoadenylyl sulfate is bound by residues R181, S189, and R193. The cysteines at positions 223 and 231 are disulfide-linked. 3'-phosphoadenylyl sulfate is bound by residues Y236, 283-292 (STDQVIKPVN), and K298. N-linked (GlcNAc...) asparagine glycans are attached at residues N341 and N366.

It belongs to the protein sulfotransferase family.

The protein resides in the golgi apparatus membrane. It catalyses the reaction L-tyrosyl-[protein] + 3'-phosphoadenylyl sulfate = O-sulfo-L-tyrosine-[protein] + adenosine 3',5'-bisphosphate + H(+). In terms of biological role, catalyzes the O-sulfation of tyrosine residues within acidic motifs of polypeptides, using 3'-phosphoadenylyl sulfate (PAPS) as cosubstrate. The polypeptide is Protein-tyrosine sulfotransferase 2 (TPST2) (Gallus gallus (Chicken)).